The following is a 392-amino-acid chain: Heat-inducible transcription repressor HrcA (392 aa).

It belongs to the HrcA family.

Negative regulator of class I heat shock genes (grpE-dnaK-dnaJ and groELS operons). Prevents heat-shock induction of these operons. The polypeptide is Heat-inducible transcription repressor HrcA (Synechococcus sp. (strain JA-3-3Ab) (Cyanobacteria bacterium Yellowstone A-Prime)).